Here is a 277-residue protein sequence, read N- to C-terminus: Tumor necrosis factor-inducible gene 6 protein (277 aa).

Residues 1–17 (MIILIYLFLLLWEDTQG) form the signal peptide. One can recognise a Link domain in the interval 36-129 (GVYHREARSG…SERWDAYCYN (94 aa)). Cystine bridges form between Cys58–Cys127, Cys82–Cys103, and Cys135–Cys161. Asn118 carries N-linked (GlcNAc...) asparagine glycosylation. Positions 135–247 (CGGVFTDPKQ…GGFQIKYVAM (113 aa)) constitute a CUB domain. Ca(2+)-binding residues include Glu183, Asp191, Asp232, Ser234, and Val235. Cys188 and Cys210 are joined by a disulfide. A glycan (N-linked (GlcNAc...) asparagine) is linked at Asn258.

As to quaternary structure, interacts (via Link domain) with inter-alpha-inhibitor (I-alpha-I) component bikunin. Interacts with ITIH2/HC2; this interaction is required for transesterification of the HC to hyaluronan. Interacts (via Link and CUB domains) with ITIH1. Chondroitin sulfate may be required for the stability of the complex. Interacts (via Link domain) with various C-X-C and C-C chemokines including PF4, CXCL8, CXCL11, CXCL12, CCL2, CCL7, CCL19, CCL21, and CCL27; this interaction interferes with chemokine binding to glycosaminoglycans. Interacts (primarily via Link domain) with BMP2; this interaction is inhibited by hyaluronan. Interacts (via both Link and CUB domains) with TNFSF11. Interacts (via CUB domain) with FN1 (via type III repeats 9-14); this interaction enhances fibronectin fibril assembly. TNFAIP6 may act as a bridging molecule between FN1 and THBS1. N-glycosylated. As to expression, expressed in airway epithelium and submucosal gland (at protein level). Colocalizes with bikunin at the ciliary border. Present in bronchoalveolar lavage fluid (at protein level). Expressed in mesenchymal stem cells. Found in the synovial fluid of patients with rheumatoid arthritis.

It is found in the secreted. Its function is as follows. Major regulator of extracellular matrix organization during tissue remodeling. Catalyzes the transfer of a heavy chain (HC) from inter-alpha-inhibitor (I-alpha-I) complex to hyaluronan. Cleaves the ester bond between the C-terminus of the HC and GalNAc residue of the chondroitin sulfate chain in I-alpha-I complex followed by transesterification of the HC to hyaluronan. In the process, potentiates the antiprotease function of I-alpha-I complex through release of free bikunin. Acts as a catalyst in the formation of hyaluronan-HC oligomers and hyaluronan-rich matrix surrounding the cumulus cell-oocyte complex, a necessary step for oocyte fertilization. Assembles hyaluronan in pericellular matrices that serve as platforms for receptor clustering and signaling. Enables binding of hyaluronan deposited on the surface of macrophages to LYVE1 on lymphatic endothelium and facilitates macrophage extravasation. Alters hyaluronan binding to functionally latent CD44 on vascular endothelium, switching CD44 into an active state that supports leukocyte rolling. Modulates the interaction of chemokines with extracellular matrix components and proteoglycans on endothelial cell surface, likely preventing chemokine gradient formation. In a negative feedback mechanism, may limit excessive neutrophil recruitment at inflammatory sites by antagonizing the association of CXCL8 with glycosaminoglycans on vascular endothelium. Has a role in osteogenesis and bone remodeling. Inhibits BMP2-dependent differentiation of mesenchymal stem cell to osteoblasts. Protects against bone erosion during inflammation by inhibiting TNFSF11/RANKL-dependent osteoclast activation. This chain is Tumor necrosis factor-inducible gene 6 protein (TNFAIP6), found in Homo sapiens (Human).